The following is a 905-amino-acid chain: Transcriptional regulator MNL1 (905 aa).

The span at 1–29 (MDSHNNIDQSVSELLSDPASVQQSYNSQL) shows a compositional bias: polar residues. 8 disordered regions span residues 1 to 34 (MDSH…GPEF), 312 to 340 (QTQA…ASHT), 383 to 419 (MDQV…NARY), 434 to 460 (SEKN…NLLS), 525 to 544 (TKEE…KPKR), 584 to 613 (NISS…SESS), 625 to 671 (NVGK…GTVE), and 685 to 733 (PASE…TSST). Residues 312 to 334 (QTQAQAQAHQQQQQQSQQQHSPQ) show a composition bias toward low complexity. Positions 439–460 (NHNNRSPPTPPTSTSSPQNLLS) are enriched in low complexity. Over residues 584-598 (NISSHHSSGTPSITT) the composition is skewed to polar residues. Residues 628–639 (KRKNKSYRKPKG) are compositionally biased toward basic residues. 2 stretches are compositionally biased toward low complexity: residues 647–669 (QQQQ…STGT) and 690–710 (SSLL…EASS). 2 consecutive C2H2-type zinc fingers follow at residues 832 to 855 (YLCN…RSLH) and 861 to 883 (YNCD…LKIH). Positions 885–905 (QEDEKDCADAETGVGMDDASG) are disordered.

It localises to the nucleus. Its function is as follows. Transcription factor that activates stress response genes via SLE (STRE-like) elements. Required for adaptation to weak acid stress such as acetic acid stress, but seems not involved in the response to heat, osmotic, ethanol, nutrient, oxidative, or heavy-metal stress. Activates a subset of the genes that are repressed by NRG1. The chain is Transcriptional regulator MNL1 (MNL1) from Candida albicans (strain SC5314 / ATCC MYA-2876) (Yeast).